We begin with the raw amino-acid sequence, 204 residues long: Probable nicotinate-nucleotide adenylyltransferase (204 aa).

It belongs to the NadD family.

The enzyme catalyses nicotinate beta-D-ribonucleotide + ATP + H(+) = deamido-NAD(+) + diphosphate. Its pathway is cofactor biosynthesis; NAD(+) biosynthesis; deamido-NAD(+) from nicotinate D-ribonucleotide: step 1/1. Functionally, catalyzes the reversible adenylation of nicotinate mononucleotide (NaMN) to nicotinic acid adenine dinucleotide (NaAD). The polypeptide is Probable nicotinate-nucleotide adenylyltransferase (Dehalococcoides mccartyi (strain ATCC BAA-2266 / KCTC 15142 / 195) (Dehalococcoides ethenogenes (strain 195))).